The following is a 304-amino-acid chain: Protoheme IX farnesyltransferase (304 aa).

The next 9 membrane-spanning stretches (helical) occupy residues 32–52, 54–74, 104–124, 126–146, 154–174, 180–200, 226–246, 247–267, and 284–304; these read VVAL…PGSV, LQPL…AAAF, ALTF…TLVN, LTAW…TAYL, IVVG…SVTG, ALLL…ALAI, CILL…LVGM, CGPV…YKAW, and FSIY…YLWV.

This sequence belongs to the UbiA prenyltransferase family. Protoheme IX farnesyltransferase subfamily.

It localises to the cell inner membrane. The enzyme catalyses heme b + (2E,6E)-farnesyl diphosphate + H2O = Fe(II)-heme o + diphosphate. The protein operates within porphyrin-containing compound metabolism; heme O biosynthesis; heme O from protoheme: step 1/1. Converts heme B (protoheme IX) to heme O by substitution of the vinyl group on carbon 2 of heme B porphyrin ring with a hydroxyethyl farnesyl side group. The sequence is that of Protoheme IX farnesyltransferase from Shewanella sediminis (strain HAW-EB3).